The primary structure comprises 277 residues: Uracil phosphoribosyltransferase homolog (277 aa).

The disordered stretch occupies residues Met-1–Asp-69. Residues Ala-37–Asp-69 are compositionally biased toward low complexity. Residues Arg-101, Arg-110, and Glu-144–Asn-147 contribute to the GTP site. Arg-154 serves as a coordination point for 5-phospho-alpha-D-ribose 1-diphosphate. Residues Arg-171 and Arg-200 each contribute to the GTP site. Tyr-206 to Thr-214 is a 5-phospho-alpha-D-ribose 1-diphosphate binding site. Position 267-269 (Thr-267–Phe-269) interacts with uracil.

The protein belongs to the UPRTase family.

The protein localises to the cytoplasm. The protein resides in the nucleus. The protein is Uracil phosphoribosyltransferase homolog (UPRT) of Gallus gallus (Chicken).